Consider the following 291-residue polypeptide: Filament protein FIN1 (291 aa).

The residue at position 54 (serine 54) is a Phosphoserine. Position 68 is a phosphothreonine (threonine 68). 2 positions are modified to phosphoserine: serine 74 and serine 88. A coiled-coil region spans residues 254–284; that stretch reads VELKEIKDLLLQMLRRQREIESRLSNIELQL.

Homooligomer; in vitro, FIN1 self-assembles into 10 nm diameter filaments. Interacts with the 14-3-3 proteins BMH1 and BMH2, and the protein phosphatase 1 complex catalytic subunit GLC7. Phosphorylated by CDC28. Phosphorylation is required for BMH1 and BMH2 interaction. Dephosphorylation by GLC7 depends on the presence of BMH1 and BMH2.

Its subcellular location is the nucleus. It is found in the cytoplasm. The protein resides in the cytoskeleton. It localises to the spindle pole. Functionally, forms cell-cycle specific filaments between the spindle pole bodies of dividing yeast cells. The sequence is that of Filament protein FIN1 (FIN1) from Saccharomyces cerevisiae (strain ATCC 204508 / S288c) (Baker's yeast).